The primary structure comprises 465 residues: E3 ubiquitin-protein ligase ORTHRUS-LIKE 1 (465 aa).

The tract at residues 31-69 (TSLSSPLDRSGDVDPLPVSDESGGSKADESMTDADETKK) is disordered. Residues 109 to 148 (CSLCNQLPDRPVTILCGHNFCLKCFDKWIDQGNQICATCR) form an RING-type zinc finger. Residues 233–374 (VRNQGVLVGE…FKVCRYLFVR (142 aa)) form the YDG domain. The chain crosses the membrane as a helical span at residues 442–462 (MAMTCLLLFVLIILVGSSSIL).

It is found in the nucleus. The protein resides in the membrane. The enzyme catalyses S-ubiquitinyl-[E2 ubiquitin-conjugating enzyme]-L-cysteine + [acceptor protein]-L-lysine = [E2 ubiquitin-conjugating enzyme]-L-cysteine + N(6)-ubiquitinyl-[acceptor protein]-L-lysine.. It functions in the pathway protein modification; protein ubiquitination. Its function is as follows. E3 ubiquitin-protein ligase. May participate in methylation-dependent transcriptional regulation. Mediates ubiquitination with the E2 ubiquitin-conjugating enzyme UBC11. This is E3 ubiquitin-protein ligase ORTHRUS-LIKE 1 (ORTHL) from Arabidopsis thaliana (Mouse-ear cress).